A 194-amino-acid polypeptide reads, in one-letter code: Large ribosomal subunit protein bL9c (194 aa).

A chloroplast-targeting transit peptide spans M1 to A39.

It belongs to the bacterial ribosomal protein bL9 family. Part of the 50S ribosomal subunit.

Its subcellular location is the plastid. It is found in the chloroplast. Binds to the 23S rRNA. The polypeptide is Large ribosomal subunit protein bL9c (RPL9) (Pisum sativum (Garden pea)).